The primary structure comprises 484 residues: Zinc metalloproteinase homolog-disintegrin albolatin (484 aa).

The first 20 residues, Met1–Ser20, serve as a signal peptide directing secretion. Positions Ile21–Leu191 are excised as a propeptide. Asn80, Asn251, and Asn301 each carry an N-linked (GlcNAc...) asparagine glycan. The 199-residue stretch at Arg194–Pro392 folds into the Peptidase M12B domain. 10 disulfide bridges follow: Cys305-Cys387, Cys345-Cys369, Cys347-Cys352, Cys403-Cys422, Cys414-Cys432, Cys416-Cys427, Cys426-Cys449, Cys440-Cys446, Cys445-Cys470, and Cys458-Cys477. The Disintegrin domain occupies Pro400–Gly484. The Cell attachment site; atypical (KGD) signature appears at Lys462–Asp464.

This sequence belongs to the venom metalloproteinase (M12B) family. P-II subfamily. P-IIb sub-subfamily. As to quaternary structure, homodimer; disulfide-linked (disintegrin). In terms of tissue distribution, expressed by the venom gland.

It localises to the secreted. Its function is as follows. The function of this complete protein has not been studied, but it may be similar to the function of the disintegrin domain. A recombinant protein of this domain (409-484) inhibits collagen-induced human platelet aggregation, without having effect on ADP-induced aggregation. It may act either by blocking the binding of fibrinogen to the platelet receptor GPIIb/GPIIIa (ITGA2B/ITGB3) or by blocking the binding of collagen to the integrin alpha-2/beta-1 complex (ITGA2/ITGB1). The protein is Zinc metalloproteinase homolog-disintegrin albolatin of Trimeresurus albolabris (White-lipped pit viper).